We begin with the raw amino-acid sequence, 176 residues long: Dual-action ribosomal maturation protein DarP (176 aa).

Acidic residues predominate over residues Met1–Ser16. The segment at Met1–Glu29 is disordered.

Belongs to the DarP family.

It localises to the cytoplasm. Its function is as follows. Member of a network of 50S ribosomal subunit biogenesis factors which assembles along the 30S-50S interface, preventing incorrect 23S rRNA structures from forming. Promotes peptidyl transferase center (PTC) maturation. In Thiobacillus denitrificans (strain ATCC 25259 / T1), this protein is Dual-action ribosomal maturation protein DarP.